The sequence spans 489 residues: Probable cytosol aminopeptidase (489 aa).

K254 and D259 together coordinate Mn(2+). The active site involves K266. Mn(2+) is bound by residues D277, D336, and E338. The active site involves R340.

It belongs to the peptidase M17 family. Mn(2+) serves as cofactor.

The protein resides in the cytoplasm. It carries out the reaction Release of an N-terminal amino acid, Xaa-|-Yaa-, in which Xaa is preferably Leu, but may be other amino acids including Pro although not Arg or Lys, and Yaa may be Pro. Amino acid amides and methyl esters are also readily hydrolyzed, but rates on arylamides are exceedingly low.. It catalyses the reaction Release of an N-terminal amino acid, preferentially leucine, but not glutamic or aspartic acids.. Its function is as follows. Presumably involved in the processing and regular turnover of intracellular proteins. Catalyzes the removal of unsubstituted N-terminal amino acids from various peptides. The polypeptide is Probable cytosol aminopeptidase (Cereibacter sphaeroides (strain ATCC 17025 / ATH 2.4.3) (Rhodobacter sphaeroides)).